Consider the following 178-residue polypeptide: ATP synthase subunit delta (178 aa).

The protein belongs to the ATPase delta chain family. As to quaternary structure, F-type ATPases have 2 components, F(1) - the catalytic core - and F(0) - the membrane proton channel. F(1) has five subunits: alpha(3), beta(3), gamma(1), delta(1), epsilon(1). F(0) has three main subunits: a(1), b(2) and c(10-14). The alpha and beta chains form an alternating ring which encloses part of the gamma chain. F(1) is attached to F(0) by a central stalk formed by the gamma and epsilon chains, while a peripheral stalk is formed by the delta and b chains.

Its subcellular location is the cell inner membrane. Functionally, f(1)F(0) ATP synthase produces ATP from ADP in the presence of a proton or sodium gradient. F-type ATPases consist of two structural domains, F(1) containing the extramembraneous catalytic core and F(0) containing the membrane proton channel, linked together by a central stalk and a peripheral stalk. During catalysis, ATP synthesis in the catalytic domain of F(1) is coupled via a rotary mechanism of the central stalk subunits to proton translocation. This protein is part of the stalk that links CF(0) to CF(1). It either transmits conformational changes from CF(0) to CF(1) or is implicated in proton conduction. The protein is ATP synthase subunit delta of Azotobacter vinelandii (strain DJ / ATCC BAA-1303).